Consider the following 195-residue polypeptide: Interferon tau-6 (195 aa).

The signal sequence occupies residues 1 to 23 (MAFVLSLLMALVLVSYGPGGSLG). 2 cysteine pairs are disulfide-bonded: cysteine 24–cysteine 122 and cysteine 52–cysteine 162. The N-linked (GlcNAc...) asparagine glycan is linked to asparagine 101.

The protein belongs to the alpha/beta interferon family. IFN-alphaII subfamily. Constitutively and exclusively expressed in the mononuclear cells of the extraembryonic trophectoderm.

The protein resides in the secreted. Its function is as follows. Paracrine hormone primarily responsible for maternal recognition of pregnancy. Interacts with endometrial receptors, probably type I interferon receptors, and blocks estrogen receptor expression, preventing the estrogen-induced increase in oxytocin receptor expression in the endometrium. This results in the suppression of the pulsatile endometrial release of the luteolytic hormone prostaglandin F2-alpha, hindering the regression of the corpus luteum (luteolysis) and therefore a return to ovarian cyclicity. This, and a possible direct effect of IFN-tau on prostaglandin synthesis, leads in turn to continued ovarian progesterone secretion, which stimulates the secretion by the endometrium of the nutrients required for the growth of the conceptus. In summary, displays particularly high antiviral and antiproliferative potency concurrently with particular weak cytotoxicity, high antiluteolytic activity and immunomodulatory properties. In contrast with other IFNs, IFN-tau is not virally inducible. This Ovis aries (Sheep) protein is Interferon tau-6 (IFNT6).